A 55-amino-acid chain; its full sequence is ATP synthase F(0) complex subunit 8 (55 aa).

Residues serine 7–isoleucine 24 traverse the membrane as a helical segment.

The protein belongs to the ATPase protein 8 family. As to quaternary structure, component of the ATP synthase complex composed at least of ATP5F1A/subunit alpha, ATP5F1B/subunit beta, ATP5MC1/subunit c (homooctomer), MT-ATP6/subunit a, MT-ATP8/subunit 8, ATP5ME/subunit e, ATP5MF/subunit f, ATP5MG/subunit g, ATP5MK/subunit k, ATP5MJ/subunit j, ATP5F1C/subunit gamma, ATP5F1D/subunit delta, ATP5F1E/subunit epsilon, ATP5PF/subunit F6, ATP5PB/subunit b, ATP5PD/subunit d, ATP5PO/subunit OSCP. ATP synthase complex consists of a soluble F(1) head domain (subunits alpha(3) and beta(3)) - the catalytic core - and a membrane F(0) domain - the membrane proton channel (subunits c, a, 8, e, f, g, k and j). These two domains are linked by a central stalk (subunits gamma, delta, and epsilon) rotating inside the F1 region and a stationary peripheral stalk (subunits F6, b, d, and OSCP).

The protein resides in the mitochondrion membrane. Subunit 8, of the mitochondrial membrane ATP synthase complex (F(1)F(0) ATP synthase or Complex V) that produces ATP from ADP in the presence of a proton gradient across the membrane which is generated by electron transport complexes of the respiratory chain. ATP synthase complex consist of a soluble F(1) head domain - the catalytic core - and a membrane F(1) domain - the membrane proton channel. These two domains are linked by a central stalk rotating inside the F(1) region and a stationary peripheral stalk. During catalysis, ATP synthesis in the catalytic domain of F(1) is coupled via a rotary mechanism of the central stalk subunits to proton translocation. In vivo, can only synthesize ATP although its ATP hydrolase activity can be activated artificially in vitro. Part of the complex F(0) domain. This is ATP synthase F(0) complex subunit 8 from Columbina passerina (Common ground-dove).